The sequence spans 209 residues: Ras-like protein (209 aa).

A GTP-binding site is contributed by 15-22; that stretch reads GGGGEGKS. Residues 37–45 carry the Effector region motif; the sequence is YDPTIEESY. Residues 62–66 and 121–124 each bind GTP; these read DTAGQ and NKCD. 2 S-palmitoyl cysteine lipidation sites follow: Cys-202 and Cys-203. Cys-206 is subject to Cysteine methyl ester. A lipid anchor (S-geranylgeranyl cysteine) is attached at Cys-206. Residues 207 to 209 constitute a propeptide, removed in mature form; the sequence is IVM.

The protein belongs to the small GTPase superfamily. Ras family.

The protein resides in the cell membrane. It catalyses the reaction GTP + H2O = GDP + phosphate + H(+). With respect to regulation, alternates between an inactive form bound to GDP and an active form bound to GTP. Activated by a guanine nucleotide-exchange factor (GEF) and inactivated by a GTPase-activating protein (GAP). In Laccaria bicolor (Bicoloured deceiver), this protein is Ras-like protein.